The primary structure comprises 599 residues: Group II intron-encoded protein LtrA (599 aa).

The Reverse transcriptase domain maps to 70-361; sequence IIQSLKDGTY…QPARFLGYDI (292 aa). The segment at 381–549 is intron maturase type-2; sequence NGSVELLIPL…AKCCELCGTS (169 aa).

In the N-terminal section; belongs to the bacterial reverse transcriptase family. In terms of assembly, homodimer. Requires Mg(2+) as cofactor.

It catalyses the reaction DNA(n) + a 2'-deoxyribonucleoside 5'-triphosphate = DNA(n+1) + diphosphate. In terms of biological role, multifunctional protein that promotes group II intron splicing and mobility by acting both on RNA and DNA. It has three activities: reverse transcriptase (RT) for intron duplication, maturase to promote splicing, and DNA endonuclease for site-specific cleavage of recipient alleles. The intron-encoded protein promotes splicing by facilitating the formation of the catalytically active structure of the intron RNA. After splicing, the protein remains bound to the excised intron lariat RNA, forming ribonucleoprotein particles, and cleaving the antisense strand of the recipient DNA in the 3' exon. After DNA cleavage, retrohoming occurs by a target DNA-primed reverse transcription of the intron RNA that had reverse spliced into the sense strand of the recipient DNA. It also contributes to the recognition of the DNA target site and acts as a repressor of its own translation. This is Group II intron-encoded protein LtrA (ltrA) from Lactococcus lactis subsp. cremoris (Streptococcus cremoris).